The sequence spans 126 residues: Probable small nuclear ribonucleoprotein Sm D1 (126 aa).

Residues 2–74 (KLVRFLMKLS…IRYIILPDPL (73 aa)) form the Sm domain. A disordered region spans residues 86-126 (RKKARAARAGASRGRGRGGMRGGRGGRGRGRGGPRGGGPRR). Positions 99–126 (GRGRGGMRGGRGGRGRGRGGPRGGGPRR) are enriched in basic residues.

It belongs to the snRNP core protein family.

Its subcellular location is the nucleus. The protein localises to the cytoplasm. The protein resides in the cytosol. Functionally, plays a role in pre-mRNA splicing as a core component of the spliceosomal U1, U2, U4 and U5 small nuclear ribonucleoproteins (snRNPs), the building blocks of the spliceosome. The polypeptide is Probable small nuclear ribonucleoprotein Sm D1 (snr-3) (Caenorhabditis elegans).